The following is a 635-amino-acid chain: Threonine--tRNA ligase (635 aa).

One can recognise a TGS domain in the interval 1 to 61 (MIVITLPDGS…EGDARLAIVT (61 aa)). The tract at residues 242 to 533 (DHRKLGRELD…LIEQHAGALP (292 aa)) is catalytic. Positions 333, 384, and 510 each coordinate Zn(2+).

This sequence belongs to the class-II aminoacyl-tRNA synthetase family. In terms of assembly, homodimer. Zn(2+) serves as cofactor.

The protein localises to the cytoplasm. The enzyme catalyses tRNA(Thr) + L-threonine + ATP = L-threonyl-tRNA(Thr) + AMP + diphosphate + H(+). Functionally, catalyzes the attachment of threonine to tRNA(Thr) in a two-step reaction: L-threonine is first activated by ATP to form Thr-AMP and then transferred to the acceptor end of tRNA(Thr). Also edits incorrectly charged L-seryl-tRNA(Thr). This Methylibium petroleiphilum (strain ATCC BAA-1232 / LMG 22953 / PM1) protein is Threonine--tRNA ligase.